Consider the following 301-residue polypeptide: Homoserine O-acetyltransferase (301 aa).

C142 functions as the Acyl-thioester intermediate in the catalytic mechanism. Substrate-binding residues include K163 and S192. H235 serves as the catalytic Proton acceptor. The active site involves E237. R249 provides a ligand contact to substrate.

This sequence belongs to the MetA family.

It localises to the cytoplasm. The catalysed reaction is L-homoserine + acetyl-CoA = O-acetyl-L-homoserine + CoA. It functions in the pathway amino-acid biosynthesis; L-methionine biosynthesis via de novo pathway; O-acetyl-L-homoserine from L-homoserine: step 1/1. Functionally, transfers an acetyl group from acetyl-CoA to L-homoserine, forming acetyl-L-homoserine. This Succinatimonas hippei (strain DSM 22608 / JCM 16073 / KCTC 15190 / YIT 12066) protein is Homoserine O-acetyltransferase.